Reading from the N-terminus, the 280-residue chain is MEWIQAAILGIVQGLTEFLPISSSAHIFIVGKLMGLGDPGAAFTAVSQLGTEAAVIVFFWRDIVRIIKHWGLSIAGKIPRNDPDARMGWLVVAGSIPIIVVGLFFQNAIEVTFRNLWIVATTLIVFGVILAVADAVGKHERKLEELTVKHGILYGLAQCLALIPGVSRSGGTITAGLLMGYTREAAARYSFLLAIPAVLGSGFYELFKIVAKHENAGDTFNLGQTALATVIAFVVGYLIIGWFLKFISHNSYRGFVWYRIALGLVVFVLLGFGVIPATLS.

A run of 8 helical transmembrane segments spans residues 1-21 (MEWI…FLPI), 40-60 (GAAF…VFFW), 89-109 (WLVV…QNAI), 116-136 (LWIV…ADAV), 146-166 (LTVK…IPGV), 191-211 (FLLA…KIVA), 227-247 (LATV…LKFI), and 260-280 (IALG…ATLS).

The protein belongs to the UppP family.

It is found in the cell membrane. It carries out the reaction di-trans,octa-cis-undecaprenyl diphosphate + H2O = di-trans,octa-cis-undecaprenyl phosphate + phosphate + H(+). Functionally, catalyzes the dephosphorylation of undecaprenyl diphosphate (UPP). Confers resistance to bacitracin. The protein is Undecaprenyl-diphosphatase of Renibacterium salmoninarum (strain ATCC 33209 / DSM 20767 / JCM 11484 / NBRC 15589 / NCIMB 2235).